Here is a 473-residue protein sequence, read N- to C-terminus: Probable aspartokinase (473 aa).

ACT domains are found at residues Ile-323–Asn-392 and Val-409–Ser-473.

Belongs to the aspartokinase family.

The catalysed reaction is L-aspartate + ATP = 4-phospho-L-aspartate + ADP. Its pathway is amino-acid biosynthesis; L-lysine biosynthesis via DAP pathway; (S)-tetrahydrodipicolinate from L-aspartate: step 1/4. The protein operates within amino-acid biosynthesis; L-methionine biosynthesis via de novo pathway; L-homoserine from L-aspartate: step 1/3. It functions in the pathway amino-acid biosynthesis; L-threonine biosynthesis; L-threonine from L-aspartate: step 1/5. The polypeptide is Probable aspartokinase (Methanocaldococcus jannaschii (strain ATCC 43067 / DSM 2661 / JAL-1 / JCM 10045 / NBRC 100440) (Methanococcus jannaschii)).